Here is a 250-residue protein sequence, read N- to C-terminus: Triosephosphate isomerase (250 aa).

Residue 9 to 11 (NWK) coordinates substrate. His94 (electrophile) is an active-site residue. Catalysis depends on Glu166, which acts as the Proton acceptor. Residues Gly172, Ser211, and 232–233 (GG) contribute to the substrate site.

Belongs to the triosephosphate isomerase family. Homodimer.

It is found in the cytoplasm. It catalyses the reaction D-glyceraldehyde 3-phosphate = dihydroxyacetone phosphate. The protein operates within carbohydrate biosynthesis; gluconeogenesis. It participates in carbohydrate degradation; glycolysis; D-glyceraldehyde 3-phosphate from glycerone phosphate: step 1/1. Involved in the gluconeogenesis. Catalyzes stereospecifically the conversion of dihydroxyacetone phosphate (DHAP) to D-glyceraldehyde-3-phosphate (G3P). This Methylococcus capsulatus (strain ATCC 33009 / NCIMB 11132 / Bath) protein is Triosephosphate isomerase.